The following is a 162-amino-acid chain: NADH-quinone oxidoreductase subunit I (162 aa).

4Fe-4S ferredoxin-type domains lie at L52 to G82 and T93 to N122. Residues C62, C65, C68, C72, C102, C105, C108, and C112 each contribute to the [4Fe-4S] cluster site.

It belongs to the complex I 23 kDa subunit family. NDH-1 is composed of 14 different subunits. Subunits NuoA, H, J, K, L, M, N constitute the membrane sector of the complex. The cofactor is [4Fe-4S] cluster.

It is found in the cell inner membrane. It carries out the reaction a quinone + NADH + 5 H(+)(in) = a quinol + NAD(+) + 4 H(+)(out). In terms of biological role, NDH-1 shuttles electrons from NADH, via FMN and iron-sulfur (Fe-S) centers, to quinones in the respiratory chain. The immediate electron acceptor for the enzyme in this species is believed to be ubiquinone. Couples the redox reaction to proton translocation (for every two electrons transferred, four hydrogen ions are translocated across the cytoplasmic membrane), and thus conserves the redox energy in a proton gradient. This chain is NADH-quinone oxidoreductase subunit I, found in Xanthobacter autotrophicus (strain ATCC BAA-1158 / Py2).